The chain runs to 271 residues: Elongation factor Ts (271 aa).

Positions threonine 76–valine 79 are involved in Mg(2+) ion dislocation from EF-Tu.

Belongs to the EF-Ts family.

The protein resides in the cytoplasm. Functionally, associates with the EF-Tu.GDP complex and induces the exchange of GDP to GTP. It remains bound to the aminoacyl-tRNA.EF-Tu.GTP complex up to the GTP hydrolysis stage on the ribosome. The polypeptide is Elongation factor Ts (Mycobacterium tuberculosis (strain ATCC 25177 / H37Ra)).